The primary structure comprises 371 residues: Pyruvate dehydrogenase E1 component subunit alpha (371 aa).

As to quaternary structure, heterodimer of an alpha and a beta chain. The cofactor is thiamine diphosphate.

The catalysed reaction is N(6)-[(R)-lipoyl]-L-lysyl-[protein] + pyruvate + H(+) = N(6)-[(R)-S(8)-acetyldihydrolipoyl]-L-lysyl-[protein] + CO2. Activity of the E1 module is inhibited by the pyruvate dehydrogenase inhibitor PdhI. The pyruvate dehydrogenase complex catalyzes the overall conversion of pyruvate to acetyl-CoA and CO(2). It contains multiple copies of three enzymatic components: pyruvate dehydrogenase (E1), dihydrolipoamide acetyltransferase (E2) and lipoamide dehydrogenase (E3). Functionally, the B.subtilis PDH complex also possesses branched-chain 2-oxoacid dehydrogenase (BCDH) activity. The protein is Pyruvate dehydrogenase E1 component subunit alpha of Bacillus subtilis (strain 168).